Here is a 728-residue protein sequence, read N- to C-terminus: 1,4-alpha-glucan branching enzyme GlgB (728 aa).

Residue aspartate 405 is the Nucleophile of the active site. The active-site Proton donor is the glutamate 458.

Belongs to the glycosyl hydrolase 13 family. GlgB subfamily. Monomer.

It catalyses the reaction Transfers a segment of a (1-&gt;4)-alpha-D-glucan chain to a primary hydroxy group in a similar glucan chain.. The protein operates within glycan biosynthesis; glycogen biosynthesis. Its function is as follows. Catalyzes the formation of the alpha-1,6-glucosidic linkages in glycogen by scission of a 1,4-alpha-linked oligosaccharide from growing alpha-1,4-glucan chains and the subsequent attachment of the oligosaccharide to the alpha-1,6 position. In Shigella dysenteriae serotype 1 (strain Sd197), this protein is 1,4-alpha-glucan branching enzyme GlgB.